The following is a 212-amino-acid chain: Uridine kinase (212 aa).

13–20 is a binding site for ATP; the sequence is GGSGSGKT.

This sequence belongs to the uridine kinase family.

Its subcellular location is the cytoplasm. It catalyses the reaction uridine + ATP = UMP + ADP + H(+). It carries out the reaction cytidine + ATP = CMP + ADP + H(+). It participates in pyrimidine metabolism; CTP biosynthesis via salvage pathway; CTP from cytidine: step 1/3. The protein operates within pyrimidine metabolism; UMP biosynthesis via salvage pathway; UMP from uridine: step 1/1. In Bacillus cereus (strain B4264), this protein is Uridine kinase.